Reading from the N-terminus, the 200-residue chain is Large ribosomal subunit protein uL4 (200 aa).

Residues 38–72 form a disordered region; it reads GRQGSKQQKTRSDVSGGGKRPWRQKGTGRARAGTI.

This sequence belongs to the universal ribosomal protein uL4 family. As to quaternary structure, part of the 50S ribosomal subunit.

In terms of biological role, one of the primary rRNA binding proteins, this protein initially binds near the 5'-end of the 23S rRNA. It is important during the early stages of 50S assembly. It makes multiple contacts with different domains of the 23S rRNA in the assembled 50S subunit and ribosome. Functionally, forms part of the polypeptide exit tunnel. The polypeptide is Large ribosomal subunit protein uL4 (Pseudomonas fluorescens (strain ATCC BAA-477 / NRRL B-23932 / Pf-5)).